Consider the following 82-residue polypeptide: MAEYLASIFGTEKDKVNCSFYFKIGACRHGDRCSRLHNKPTFSQTIVLLNLYRNPQNTAQTADGSHCHVSDVEVQEHYDNFF.

At A2 the chain carries N-acetylalanine. Residues 12–40 (EKDKVNCSFYFKIGACRHGDRCSRLHNKP) form a C3H1-type zinc finger. Position 39 is an N6-methyllysine (K39). The RRM domain maps to 65–82 (SHCHVSDVEVQEHYDNFF).

Belongs to the splicing factor SR family. In terms of assembly, identified in the spliceosome C complex. Heterodimer with U2AF2. Interacts (via RS domain) with PHF5A (via N-terminus). Interacts with ZRANB2. Interacts with SDE2. Interacts with SF3B1.

It is found in the nucleus. The protein resides in the nucleus speckle. Its function is as follows. Plays a critical role in both constitutive and enhancer-dependent splicing by mediating protein-protein interactions and protein-RNA interactions required for accurate 3'-splice site selection. Recruits U2 snRNP to the branch point. Directly mediates interactions between U2AF2 and proteins bound to the enhancers and thus may function as a bridge between U2AF2 and the enhancer complex to recruit it to the adjacent intron. This is Splicing factor U2AF 35 kDa subunit (U2AF1) from Sus scrofa (Pig).